Reading from the N-terminus, the 340-residue chain is Ketol-acid reductoisomerase (NADP(+)) (340 aa).

Residues 1-183 (MAITVYYDKD…GGGRTGIIET (183 aa)) form the KARI N-terminal Rossmann domain. Residues 26 to 29 (FGSQ), R49, S52, S54, and 84 to 87 (DEIQ) each bind NADP(+). Residue H109 is part of the active site. Position 135 (G135) interacts with NADP(+). The KARI C-terminal knotted domain maps to 184–329 (TFKAETETDL…RNLRAMMPWI (146 aa)). Residues D192, E196, E228, and E232 each contribute to the Mg(2+) site. Residue S253 coordinates substrate.

This sequence belongs to the ketol-acid reductoisomerase family. Requires Mg(2+) as cofactor.

The enzyme catalyses (2R)-2,3-dihydroxy-3-methylbutanoate + NADP(+) = (2S)-2-acetolactate + NADPH + H(+). It catalyses the reaction (2R,3R)-2,3-dihydroxy-3-methylpentanoate + NADP(+) = (S)-2-ethyl-2-hydroxy-3-oxobutanoate + NADPH + H(+). It participates in amino-acid biosynthesis; L-isoleucine biosynthesis; L-isoleucine from 2-oxobutanoate: step 2/4. The protein operates within amino-acid biosynthesis; L-valine biosynthesis; L-valine from pyruvate: step 2/4. In terms of biological role, involved in the biosynthesis of branched-chain amino acids (BCAA). Catalyzes an alkyl-migration followed by a ketol-acid reduction of (S)-2-acetolactate (S2AL) to yield (R)-2,3-dihydroxy-isovalerate. In the isomerase reaction, S2AL is rearranged via a Mg-dependent methyl migration to produce 3-hydroxy-3-methyl-2-ketobutyrate (HMKB). In the reductase reaction, this 2-ketoacid undergoes a metal-dependent reduction by NADPH to yield (R)-2,3-dihydroxy-isovalerate. The polypeptide is Ketol-acid reductoisomerase (NADP(+)) (Campylobacter jejuni (strain RM1221)).